The sequence spans 438 residues: Actin-like protein 7A (438 aa).

Positions A36–P56 are required for interaction with TES.

Belongs to the actin family. In terms of assembly, interacts (via N-terminus) with TES (via LIM domain 2). Heterodimer with TES; the heterodimer interacts with ENAH to form a heterotrimer. Interacts with ACTL9. Interacts with CYLC1; the interaction may be relevant for proper acrosome attachment to the nuclear envelope.

It is found in the cytoplasm. Its subcellular location is the cytoskeleton. The protein resides in the golgi apparatus. The protein localises to the nucleus. Functionally, essential for normal spermatogenesis and male fertility. Required for normal sperm head morphology, acroplaxome formation, acrosome attachment, and acrosome granule stability. May anchor and stabilize acrosomal adherence to the acroplaxome at least in part by facilitating the presence of F-actin in the subacrosomal space. May play an important role in formation and fusion of Golgi-derived vesicles during acrosome biogenesis. The polypeptide is Actin-like protein 7A (ACTL7A) (Bos taurus (Bovine)).